Reading from the N-terminus, the 252-residue chain is Phosphate import ATP-binding protein PstB 1 (252 aa).

In terms of domain architecture, ABC transporter spans 6-247 (LKVNDLSVYY…PQKQETEDYI (242 aa)). Residue 38–45 (GPSGSGKS) participates in ATP binding.

Belongs to the ABC transporter superfamily. Phosphate importer (TC 3.A.1.7) family. The complex is composed of two ATP-binding proteins (PstB), two transmembrane proteins (PstC and PstA) and a solute-binding protein (PstS).

It is found in the cell membrane. The catalysed reaction is phosphate(out) + ATP + H2O = ADP + 2 phosphate(in) + H(+). In terms of biological role, part of the ABC transporter complex PstSACB involved in phosphate import. Responsible for energy coupling to the transport system. The protein is Phosphate import ATP-binding protein PstB 1 of Streptococcus mutans serotype c (strain ATCC 700610 / UA159).